The chain runs to 529 residues: Basal body-orientation factor 1 (529 aa).

Residues 1–13 (MPSKGKDKKKGKS) are compositionally biased toward basic residues. Positions 1–22 (MPSKGKDKKKGKSRGKDTKKLI) are disordered. Coiled coils occupy residues 55–198 (DTSR…LKQE) and 271–361 (IKEK…EVER). The tract at residues 510 to 529 (GKVVLPTIPKGPQESDTGTF) is disordered.

Belongs to the BBOF1 family. In terms of assembly, interacts with MNS1 and ODF2.

The protein localises to the cytoplasm. The protein resides in the cytoskeleton. It localises to the cilium basal body. Its subcellular location is the flagellum axoneme. Functionally, plays an essential role in sperm motility and male fertility by stabilizing the sperm flagellar axonemal structure. May be required for the stability of ODF2 and MANS1 proteins. Dispensable for the assembly and function of motile cilia. The polypeptide is Basal body-orientation factor 1 (Macaca fascicularis (Crab-eating macaque)).